Here is a 640-residue protein sequence, read N- to C-terminus: Threonine--tRNA ligase (640 aa).

The interval 224-525 (DHRKLGKELD…LTEHYAGAFP (302 aa)) is catalytic. The Zn(2+) site is built by Cys323, His374, and His502.

This sequence belongs to the class-II aminoacyl-tRNA synthetase family. Homodimer. The cofactor is Zn(2+).

It is found in the cytoplasm. The catalysed reaction is tRNA(Thr) + L-threonine + ATP = L-threonyl-tRNA(Thr) + AMP + diphosphate + H(+). Its function is as follows. Catalyzes the attachment of threonine to tRNA(Thr) in a two-step reaction: L-threonine is first activated by ATP to form Thr-AMP and then transferred to the acceptor end of tRNA(Thr). Also edits incorrectly charged L-seryl-tRNA(Thr). In Tropheryma whipplei (strain TW08/27) (Whipple's bacillus), this protein is Threonine--tRNA ligase.